We begin with the raw amino-acid sequence, 429 residues long: Glutamate-1-semialdehyde 2,1-aminomutase (429 aa).

At lysine 267 the chain carries N6-(pyridoxal phosphate)lysine.

The protein belongs to the class-III pyridoxal-phosphate-dependent aminotransferase family. HemL subfamily. Homodimer. Pyridoxal 5'-phosphate is required as a cofactor.

It localises to the cytoplasm. The catalysed reaction is (S)-4-amino-5-oxopentanoate = 5-aminolevulinate. It functions in the pathway porphyrin-containing compound metabolism; protoporphyrin-IX biosynthesis; 5-aminolevulinate from L-glutamyl-tRNA(Glu): step 2/2. This Xanthomonas euvesicatoria pv. vesicatoria (strain 85-10) (Xanthomonas campestris pv. vesicatoria) protein is Glutamate-1-semialdehyde 2,1-aminomutase.